A 328-amino-acid chain; its full sequence is Phenylalanine--tRNA ligase alpha subunit (328 aa).

Glu-245 contacts Mg(2+).

The protein belongs to the class-II aminoacyl-tRNA synthetase family. Phe-tRNA synthetase alpha subunit type 1 subfamily. Tetramer of two alpha and two beta subunits. Mg(2+) is required as a cofactor.

The protein resides in the cytoplasm. The enzyme catalyses tRNA(Phe) + L-phenylalanine + ATP = L-phenylalanyl-tRNA(Phe) + AMP + diphosphate + H(+). The protein is Phenylalanine--tRNA ligase alpha subunit of Helicobacter acinonychis (strain Sheeba).